Here is a 561-residue protein sequence, read N- to C-terminus: Putative transport protein YbjL (561 aa).

Helical transmembrane passes span 8–28 (LLNGNYILLLFVVLALGLCLG), 32–52 (LGSIQLGNSIGVLVVSLLLGQ), 66–86 (FMLFIFCVGVEAGPNFFSIFF), 94–114 (MLALVMVGSALVIALGLGKLF), and 158–178 (NLSLGYALTYLIGLVSLIVGA). RCK C-terminal domains lie at 200–288 (RGLD…SFRN) and 292–373 (VFDR…RIGF). A run of 5 helical transmembrane segments spans residues 383-403 (LLAFCAFFVIGLMIGMITFQF), 406-426 (FSFGMGNAAGLLFAGIMLGFM), 451-471 (VFMAGVGLSAGSGINNGLGAI), 475-495 (MLIAGLIVSLVPVVICFLFGA), and 540-560 (AIANVLLTLAGTIIVMVWPGL).

The protein belongs to the AAE transporter (TC 2.A.81) family. YbjL subfamily.

Its subcellular location is the cell membrane. The protein is Putative transport protein YbjL of Shigella boydii serotype 4 (strain Sb227).